A 386-amino-acid polypeptide reads, in one-letter code: Bifunctional chorismate mutase/prephenate dehydratase (386 aa).

The 92-residue stretch at 1-92 folds into the Chorismate mutase domain; sequence MTSENPLLAL…DSVLTQQALL (92 aa). Positions 11, 28, 39, 48, 52, 84, and 88 each coordinate substrate. The 181-residue stretch at 105–285 folds into the Prephenate dehydratase domain; sequence RIAFLGPKGS…NFTRFVVLAR (181 aa). Residues 299-376 enclose the ACT domain; sequence TLLMATGQQA…RSMKVLGCYP (78 aa).

The protein localises to the cytoplasm. It catalyses the reaction chorismate = prephenate. It carries out the reaction prephenate + H(+) = 3-phenylpyruvate + CO2 + H2O. The protein operates within amino-acid biosynthesis; L-phenylalanine biosynthesis; phenylpyruvate from prephenate: step 1/1. Its pathway is metabolic intermediate biosynthesis; prephenate biosynthesis; prephenate from chorismate: step 1/1. Functionally, catalyzes the Claisen rearrangement of chorismate to prephenate and the decarboxylation/dehydration of prephenate to phenylpyruvate. The polypeptide is Bifunctional chorismate mutase/prephenate dehydratase (pheA) (Escherichia coli O157:H7).